Reading from the N-terminus, the 528-residue chain is GMP synthase [glutamine-hydrolyzing] (528 aa).

The 192-residue stretch at 13-204 (AIVILDFGSQ…VNHICGCEQD (192 aa)) folds into the Glutamine amidotransferase type-1 domain. The active-site Nucleophile is the cysteine 90. Active-site residues include histidine 178 and glutamate 180. The GMPS ATP-PPase domain maps to 205–403 (WTTNAFIDEA…LGLPEEIVRR (199 aa)). Residue 232–238 (SGGVDSS) participates in ATP binding.

As to quaternary structure, homodimer.

It catalyses the reaction XMP + L-glutamine + ATP + H2O = GMP + L-glutamate + AMP + diphosphate + 2 H(+). It functions in the pathway purine metabolism; GMP biosynthesis; GMP from XMP (L-Gln route): step 1/1. Its function is as follows. Catalyzes the synthesis of GMP from XMP. This is GMP synthase [glutamine-hydrolyzing] from Synechococcus sp. (strain CC9902).